Reading from the N-terminus, the 504-residue chain is Maturase K (504 aa).

It belongs to the intron maturase 2 family. MatK subfamily.

The protein localises to the plastid. Its subcellular location is the chloroplast. Usually encoded in the trnK tRNA gene intron. Probably assists in splicing its own and other chloroplast group II introns. The protein is Maturase K of Hamamelis virginiana (Witch-hazel).